We begin with the raw amino-acid sequence, 78 residues long: Acyl carrier protein 1 (78 aa).

Residues 2–77 (STIEERVKKI…EAIDYIVAHQ (76 aa)) enclose the Carrier domain. The residue at position 37 (Ser37) is an O-(pantetheine 4'-phosphoryl)serine.

This sequence belongs to the acyl carrier protein (ACP) family. 4'-phosphopantetheine is transferred from CoA to a specific serine of apo-ACP by AcpS. This modification is essential for activity because fatty acids are bound in thioester linkage to the sulfhydryl of the prosthetic group.

It localises to the cytoplasm. The protein operates within lipid metabolism; fatty acid biosynthesis. Carrier of the growing fatty acid chain in fatty acid biosynthesis. In Pseudomonas aeruginosa (strain ATCC 15692 / DSM 22644 / CIP 104116 / JCM 14847 / LMG 12228 / 1C / PRS 101 / PAO1), this protein is Acyl carrier protein 1.